A 76-amino-acid polypeptide reads, in one-letter code: Protein OPG128 (76 aa).

A disulfide bridge connects residues cysteine 17 and cysteine 21.

This sequence belongs to the orthopoxvirus OPG128 family. As to quaternary structure, interacts with sulfhydryl oxidase OPG072; this interaction involves formation of a transient disulfide-bonded intermediate, allowing disulfide bond transfer. Interacts with OPG088; this interaction involves formation of a transient disulfide-bonded intermediate, allowing disulfide bond transfer.

Functionally, late protein which probably participates in disulfide bond formation by functioning as a thiol-disulfide transfer protein between membrane-associated OPG072 and OPG08. The complete pathway for formation of disulfide bonds in intracellular virion membrane proteins sequentially involves oxidation of OPG072, OPG128 and OPG08. The protein is Protein OPG128 (OPG128) of Variola virus (isolate Human/India/Ind3/1967) (VARV).